A 176-amino-acid polypeptide reads, in one-letter code: RNA pyrophosphohydrolase (176 aa).

A Nudix hydrolase domain is found at 6–149; sequence GYRPNVGIVI…KRDVYRRVMK (144 aa). The Nudix box motif lies at 38-59; it reads GGINPGESAEQAMYRELFEEVG.

It belongs to the Nudix hydrolase family. RppH subfamily. A divalent metal cation is required as a cofactor.

Its function is as follows. Accelerates the degradation of transcripts by removing pyrophosphate from the 5'-end of triphosphorylated RNA, leading to a more labile monophosphorylated state that can stimulate subsequent ribonuclease cleavage. This is RNA pyrophosphohydrolase from Shigella boydii serotype 4 (strain Sb227).